Here is a 297-residue protein sequence, read N- to C-terminus: Putative peptidyl-prolyl cis-trans isomerase YacD (297 aa).

The N-terminal stretch at 1–32 (MKSRTIWTIILGALLVCCIAVAYTLTKSQAGA) is a signal peptide. In terms of domain architecture, PpiC spans 154–247 (DDSYRIRHIV…NGYAIIQLKE (94 aa)).

The catalysed reaction is [protein]-peptidylproline (omega=180) = [protein]-peptidylproline (omega=0). This is Putative peptidyl-prolyl cis-trans isomerase YacD (yacD) from Bacillus subtilis (strain 168).